A 208-amino-acid chain; its full sequence is Uracil phosphoribosyltransferase (208 aa).

5-phospho-alpha-D-ribose 1-diphosphate-binding positions include Arg78, Arg103, and Asp130–Ser138. Uracil contacts are provided by residues Ile193 and Gly198 to Ala200. 5-phospho-alpha-D-ribose 1-diphosphate is bound at residue Asp199.

It belongs to the UPRTase family. Requires Mg(2+) as cofactor.

It carries out the reaction UMP + diphosphate = 5-phospho-alpha-D-ribose 1-diphosphate + uracil. Its pathway is pyrimidine metabolism; UMP biosynthesis via salvage pathway; UMP from uracil: step 1/1. With respect to regulation, allosterically activated by GTP. Catalyzes the conversion of uracil and 5-phospho-alpha-D-ribose 1-diphosphate (PRPP) to UMP and diphosphate. This Klebsiella pneumoniae (strain 342) protein is Uracil phosphoribosyltransferase.